The primary structure comprises 374 residues: tRNA N6-adenosine threonylcarbamoyltransferase (374 aa).

The Fe cation site is built by His117 and His121. Substrate is bound by residues 140-144 (LVSGG), Asp174, Gly187, Asp191, and Asn283. Asp311 is a binding site for Fe cation. The segment covering 337-352 (ADSSLPVTEPHVPGQG) has biased composition (low complexity). Residues 337 to 374 (ADSSLPVTEPHVPGQGHPHGHPHGHDHVHEVSKENLYS) form a disordered region. Residues 359–374 (HGHDHVHEVSKENLYS) are compositionally biased toward basic and acidic residues.

Belongs to the KAE1 / TsaD family. Fe(2+) serves as cofactor.

The protein resides in the cytoplasm. It catalyses the reaction L-threonylcarbamoyladenylate + adenosine(37) in tRNA = N(6)-L-threonylcarbamoyladenosine(37) in tRNA + AMP + H(+). Functionally, required for the formation of a threonylcarbamoyl group on adenosine at position 37 (t(6)A37) in tRNAs that read codons beginning with adenine. Is involved in the transfer of the threonylcarbamoyl moiety of threonylcarbamoyl-AMP (TC-AMP) to the N6 group of A37, together with TsaE and TsaB. TsaD likely plays a direct catalytic role in this reaction. The chain is tRNA N6-adenosine threonylcarbamoyltransferase from Streptomyces coelicolor (strain ATCC BAA-471 / A3(2) / M145).